The primary structure comprises 199 residues: Ras-related and estrogen-regulated growth inhibitor (199 aa).

GTP contacts are provided by residues 13 to 20 (GRAGVGKS), 60 to 64 (DTAGQ), and 118 to 121 (NKAD).

This sequence belongs to the small GTPase superfamily. Ras family. In terms of tissue distribution, detected in heart, brain, placenta, lung, liver, skin, kidney and pancreas. Detected in estrogen receptor-positive breast-derived cell lines, but not in estrogen receptor-negative cell lines. Expression is decreased or lost in a significant proportion of primary breast tumors with poor clinical prognosis.

It localises to the cytoplasm. It catalyses the reaction GTP + H2O = GDP + phosphate + H(+). In terms of biological role, binds GDP/GTP and possesses intrinsic GTPase activity. Has higher affinity for GDP than for GTP. In cell lines overexpression leads to a reduction in the rate of proliferation, colony formation and in tumorigenic potential. In Homo sapiens (Human), this protein is Ras-related and estrogen-regulated growth inhibitor (RERG).